The chain runs to 653 residues: Macrolide export ATP-binding/permease protein MacB (653 aa).

One can recognise an ABC transporter domain in the interval L6–A244. G42–S49 provides a ligand contact to ATP. 4 consecutive transmembrane segments (helical) span residues L278–G298, L526–M546, M587–V607, and A616–M636.

This sequence belongs to the ABC transporter superfamily. Macrolide exporter (TC 3.A.1.122) family. Homodimer.

It is found in the cell inner membrane. In terms of biological role, non-canonical ABC transporter that contains transmembrane domains (TMD), which form a pore in the inner membrane, and an ATP-binding domain (NBD), which is responsible for energy generation. Confers resistance against macrolides. This chain is Macrolide export ATP-binding/permease protein MacB, found in Burkholderia thailandensis (strain ATCC 700388 / DSM 13276 / CCUG 48851 / CIP 106301 / E264).